Here is a 237-residue protein sequence, read N- to C-terminus: N-alpha-acetyltransferase 40 (237 aa).

The N-myristoyl glycine moiety is linked to residue G2. The N-acetyltransferase domain occupies 63-216 (SGLEPATVDW…EDCSYEILSR (154 aa)). Residues Y85, 127 to 129 (DVE), and Y138 each bind substrate. Acetyl-CoA-binding positions include 140 to 142 (VQL) and 148 to 153 (RKGLGK). Position 174 (T174) interacts with substrate. N179 contacts acetyl-CoA. The substrate site is built by S197 and Y211.

This sequence belongs to the acetyltransferase family. NAA40 subfamily.

It is found in the cytoplasm. The protein resides in the nucleus. It catalyses the reaction N-terminal L-seryl-[histone H4] + acetyl-CoA = N-terminal N(alpha)-acetyl-L-seryl-[histone H4] + CoA + H(+). The enzyme catalyses N-terminal L-seryl-[histone H2A] + acetyl-CoA = N-terminal N(alpha)-acetyl-L-seryl-[histone H2A] + CoA + H(+). Functionally, N-alpha-acetyltransferase that specifically mediates the acetylation of the N-terminal residues of histones H4 and H2A. In contrast to other N-alpha-acetyltransferase, has a very specific selectivity for histones H4 and H2A N-terminus and specifically recognizes the 'Ser-Gly-Arg-Gly sequence'. Acts as a negative regulator of apoptosis. May play a role in hepatic lipid metabolism. The polypeptide is N-alpha-acetyltransferase 40 (Mus musculus (Mouse)).